The chain runs to 296 residues: MAMVQGKSLKYRVWATHIALWAFLSMIIFPLLMIVAISFREGNFATGSLIPDNPSLEHWKLALGFSVTNADGSVTPPPFPVLTWLWNSVKVAGITSILIVALSTTSAYAFARLRFKGKETILKAMMIFQMFPAVLALVALYALFDKLGQYIPFLGLNTHGGLIFSYLGGIALHVWTIKGYFETIDNSLEEAAALDGATPWQAFRLVLLPLSVPILAVVFILSFIGVVGEVPVASLLLSDVNSYTLAVGMQQYLYPQNYLWGDFAAAAVLSALPITIVFLLAQRWLVGGLTAGGVKG.

Residues 1–12 lie on the Cytoplasmic side of the membrane; the sequence is MAMVQGKSLKYR. The chain crosses the membrane as a helical span at residues 13 to 35; the sequence is VWATHIALWAFLSMIIFPLLMIV. Over 36-88 the chain is Periplasmic; it reads AISFREGNFATGSLIPDNPSLEHWKLALGFSVTNADGSVTPPPFPVLTWLWNS. The ABC transmembrane type-1 domain occupies 85 to 281; that stretch reads LWNSVKVAGI…LPITIVFLLA (197 aa). Residues 89-111 traverse the membrane as a helical segment; it reads VKVAGITSILIVALSTTSAYAFA. Topologically, residues 112-123 are cytoplasmic; sequence RLRFKGKETILK. Residues 124 to 143 form a helical membrane-spanning segment; that stretch reads AMMIFQMFPAVLALVALYAL. Residues 144–152 lie on the Periplasmic side of the membrane; sequence FDKLGQYIP. A helical membrane pass occupies residues 153 to 175; it reads FLGLNTHGGLIFSYLGGIALHVW. The Cytoplasmic portion of the chain corresponds to 176–204; that stretch reads TIKGYFETIDNSLEEAAALDGATPWQAFR. The chain crosses the membrane as a helical span at residues 205-227; sequence LVLLPLSVPILAVVFILSFIGVV. At 228–257 the chain is on the periplasmic side; that stretch reads GEVPVASLLLSDVNSYTLAVGMQQYLYPQN. Residues 258–280 form a helical membrane-spanning segment; sequence YLWGDFAAAAVLSALPITIVFLL. Residues 281-296 lie on the Cytoplasmic side of the membrane; sequence AQRWLVGGLTAGGVKG.

It belongs to the binding-protein-dependent transport system permease family. MalFG subfamily. As to quaternary structure, the complex is composed of two ATP-binding proteins (MalK), two transmembrane proteins (MalG and MalF) and a solute-binding protein (MalE).

It localises to the cell inner membrane. Functionally, part of the ABC transporter complex MalEFGK involved in maltose/maltodextrin import. Probably responsible for the translocation of the substrate across the membrane. The polypeptide is Maltose/maltodextrin transport system permease protein MalG (malG) (Vibrio vulnificus (strain CMCP6)).